Reading from the N-terminus, the 186-residue chain is Ribosome-recycling factor (186 aa).

Basic and acidic residues-rich tracts occupy residues 134–169 (RDANKAAETAEKDKEMTEDDRDKTKDQVQELTKKAE) and 176–186 (AKAREAEVMED). The disordered stretch occupies residues 134–186 (RDANKAAETAEKDKEMTEDDRDKTKDQVQELTKKAETNVNESAKAREAEVMED).

This sequence belongs to the RRF family.

The protein localises to the cytoplasm. Responsible for the release of ribosomes from messenger RNA at the termination of protein biosynthesis. May increase the efficiency of translation by recycling ribosomes from one round of translation to another. The sequence is that of Ribosome-recycling factor from Rhodopirellula baltica (strain DSM 10527 / NCIMB 13988 / SH1).